The sequence spans 339 residues: Ketol-acid reductoisomerase (NADP(+)) (339 aa).

Residues 1 to 182 (MRVYYDRDAD…GGGRSGVIET (182 aa)) form the KARI N-terminal Rossmann domain. Residues 24–27 (YGSQ), Arg48, Ser51, Thr53, and 83–86 (DELQ) each bind NADP(+). His108 is a catalytic residue. Gly134 is an NADP(+) binding site. The region spanning 183–328 (TFKEECETDL…GKLRAMMPWI (146 aa)) is the KARI C-terminal knotted domain. Residues Asp191, Glu195, Glu227, and Glu231 each coordinate Mg(2+). Ser252 lines the substrate pocket.

The protein belongs to the ketol-acid reductoisomerase family. Mg(2+) is required as a cofactor.

It carries out the reaction (2R)-2,3-dihydroxy-3-methylbutanoate + NADP(+) = (2S)-2-acetolactate + NADPH + H(+). It catalyses the reaction (2R,3R)-2,3-dihydroxy-3-methylpentanoate + NADP(+) = (S)-2-ethyl-2-hydroxy-3-oxobutanoate + NADPH + H(+). It functions in the pathway amino-acid biosynthesis; L-isoleucine biosynthesis; L-isoleucine from 2-oxobutanoate: step 2/4. The protein operates within amino-acid biosynthesis; L-valine biosynthesis; L-valine from pyruvate: step 2/4. Functionally, involved in the biosynthesis of branched-chain amino acids (BCAA). Catalyzes an alkyl-migration followed by a ketol-acid reduction of (S)-2-acetolactate (S2AL) to yield (R)-2,3-dihydroxy-isovalerate. In the isomerase reaction, S2AL is rearranged via a Mg-dependent methyl migration to produce 3-hydroxy-3-methyl-2-ketobutyrate (HMKB). In the reductase reaction, this 2-ketoacid undergoes a metal-dependent reduction by NADPH to yield (R)-2,3-dihydroxy-isovalerate. The polypeptide is Ketol-acid reductoisomerase (NADP(+)) (Brucella canis (strain ATCC 23365 / NCTC 10854 / RM-666)).